An 87-amino-acid polypeptide reads, in one-letter code: Bombyxin B-10 (87 aa).

Positions 1–19 are cleaved as a signal peptide; the sequence is MKTILIFLVVISLMYSGEA. Intrachain disulfides connect Cys-27–Cys-73, Cys-39–Cys-86, and Cys-72–Cys-77. A propeptide spans 46–64 (bombyxin B-10 C peptide); that stretch reads SGAQYAPYFWTRQYLGSRG.

Belongs to the insulin family. In terms of assembly, heterodimer of a B chain and an A chain linked by two disulfide bonds.

It localises to the secreted. Brain peptide responsible for activation of prothoracic glands to produce ecdysone in insects. The sequence is that of Bombyxin B-10 (BBXB10) from Bombyx mori (Silk moth).